The primary structure comprises 1437 residues: MKKSQREDIFKKMSEEMDNITAEEIIDKHLQKDLDAEENQNVAKTLRGKVREKLKISKINKGEKSSTEQLIDSEIHQRSKLSPQTEVSLDESLSFFILSGEEGSALGKSSEQRPVNRSYPKCFSLGVNLQNVAESEEEEFMKEFILTDILKVKAADYEDDQEQIKKQKANIFVPSSSPVVNQRKLPKDMMPRILEDEGFYIQRKPEIYKKTCNKMENRLLKLEEGKCWFGESGEIMSLPTPIKQSWNFRLNVRKEPLNPLLKTIYRKAVKYDLGSSFMNKMEGSREIYQLDLNIVGLQFSHHHLFNQEQVLCARLLQLYECFQDRQQQNVSQLLYEKLKALTDATKLSNENSEINQLTRKSLQDYYWQISNTKQMYDLERGKDLSLLHSILRTWKQIKSLRHGQGFTSTPIKLQVQRIKMNKCDEQEQISEMSETEKKNEGKELKNGKKLESLSYLASDETEIERIKPITLRPQLSFTAELTSLSKCSLHEQKRRAKIQKLKYFIKIFYNNKQVSCTSVSPLQFDFKVMFQQIFNIQLMYWPEVICLEVYEKSKRTSLLAKLYIPLPNYTELKGKTALQYVEFSSDKLVMPADGEVGSNVPFLLEGNGTEELCLLTSGKLSYSLSWSLDENGLPLIPMPQSLRSSYCSMLRNVDARSVPGIPWLMNEQKLFEWANEVRIDPNNPEYSDLMESVTYMRLKGQDIPKYFRLEQLQDEFNFVSEEEMAKSKRFQLLQLRNAGQLDNFLLQQMPLHDTEIPDLVFQEYESQKEKEVSVSDVNSITAQRINSANFLKKVRRLIMKRIVKISKCNLSDIVNDYEEIVSTSQLTDAVCKFVEPRRKLKPQRKERKKVTAQAISDGDIKILVRIVRAYNIPTRKTTINGSLDMPTCLKSSISCLRHRETIKSVASDETLHEDTVHPFVEVSFQHTVYKTNTASGSHPCWNEEIKVDFVSPGHDYSFSSLSKIKDNIYINIFDEMMTEKHEDHCLKSCSGHSYIRKNWLGCIVFPFSALLQQSEISGTFQVTIPPVLLGYTWSNTYVFPKEDSNEQNLKECTFLNIFATIEPQISYVTCNPTLDKFLDQTEVLQRAQIFKKNCKAMFPNRRIVTTVFNDEGIQFLVTRYIKALNPPQQLLDIFLHNSNATFDLIARFVSLIPFVPNTPDENDGSDIWMTSEHCISLAIGNKEEHAILLCNFFLYFGKKALVLLGTSVLEGHVAYVVTQETNEYLLWNPSTGQCYKQFDPFCPLKSVDCLFDDRNVWFNIQQNNTPMAVFFDYSKESFWKQLLPKNVQGTKIQSIQPEEIIYFETDKSMVEDLRNRIERTLKSKVMEWRPKHPTHWNRQCTFILRQILPKLEFGIGSFVSSEGDNEFERILQFYWVTGFPIQMPYIDVQSIIDAVYQTGIHSAEFPQTEFALAVYIHPYPNNILSVWVYLASLVQHQ.

The sequence is that of Protein CC2D2B from Homo sapiens (Human).